The primary structure comprises 487 residues: MSDDKPFLCTAPGCGQRFTNEDHLAVHKHKHEMTLKFGPARNDSVIVADQTPTPTRFLKNCEEVGLFNELASPFENEFKKASEDDIKKMPLDLSPLATPIIRSKIEEPSVVETTHQDSPLPHPESTTNDEKEIPLAQTAQPTSAIVRPASLQVPNVLLTSSDSSVIIQQAVPSPTSSTVITQAPSSNRPIVPVPGPFPLLLHLPNGQTMPVAIPASITSSNVHVPAAVPLVRPVTMVPSVPGIPGPSSPQPVQSEAKMRLKAALTQQHPPVTNGDTVKGHGSGLVRAQSEESRPQSLQQPATSTTETPASPAHTTPQTQNTSGRRRRAANEDPDEKRRKFLERNRAAASRCRQKRKVWVQSLEKKAEDLSSLNGQLQSEVTLLRNEVAQLKQLLLAHKDCPVTAMQKKSGYHTADKDDSSEDLSVPSSPHTEAIQHSSVSTSNGVSSTSKTEAGATSVLTQMADQSTEPALSQIVMAPSSQAQPSGS.

A C2H2-type zinc finger spans residues 7-31 (FLCTAPGCGQRFTNEDHLAVHKHKH). T34 carries the post-translational modification Phosphothreonine; by PKC/PRKCH. S44 bears the Phosphoserine; by VRK1 mark. Residues T51 and T53 each carry the phosphothreonine modification. Position 55 is a phosphothreonine; by VRK1 (T55). Phosphoserine is present on residues S72 and S94. A Phosphothreonine modification is found at T98. Phosphoserine; by PKC/PRKCA and PKC/PRKCB is present on S103. Disordered regions lie at residues 107–130 (EPSVVETTHQDSPLPHPESTTNDE) and 241–355 (PGIP…RQKR). The residue at position 118 (S118) is a Phosphoserine. Over residues 264–275 (LTQQHPPVTNGD) the composition is skewed to polar residues. Residues 278–281 (KGHG) are essential for its histone acetyltransferase activity. A compositionally biased stretch (low complexity) spans 300 to 316 (PATSTTETPASPAHTTP). S310 carries the post-translational modification Phosphoserine. Position 322 is a phosphoserine; by PKC/PRKCA and PKC/PRKCB (S322). The segment covering 328–345 (AANEDPDEKRRKFLERNR) has biased composition (basic and acidic residues). Positions 334–397 (DEKRRKFLER…AQLKQLLLAH (64 aa)) constitute a bZIP domain. The interval 336–356 (KRRKFLERNRAAASRCRQKRK) is basic motif. At K339 the chain carries N6-acetyllysine. Residue S349 is modified to Phosphoserine; by PKC/PRKCA and PKC/PRKCB. Residue K356 is modified to N6-acetyllysine. Residues 362–390 (LEKKAEDLSSLNGQLQSEVTLLRNEVAQL) form a leucine-zipper region. The short motif at 387–396 (VAQLKQLLLA) is the Nuclear export signal element. Positions 407–487 (KKSGYHTADK…PSSQAQPSGS (81 aa)) are disordered. Phosphoserine occurs at positions 424 and 428. Positions 425–436 (VPSSPHTEAIQH) are enriched in polar residues. The segment covering 437-449 (SSVSTSNGVSSTS) has biased composition (low complexity). A compositionally biased stretch (polar residues) spans 457–470 (SVLTQMADQSTEPA). Phosphoserine; by ATM occurs at positions 472 and 480. Residues 478–487 (PSSQAQPSGS) are compositionally biased toward polar residues.

It belongs to the bZIP family. ATF subfamily. Binds DNA as a dimer and can form a homodimer in the absence of DNA. Can form a heterodimer with JUN. Heterodimerization is essential for its transcriptional activity. Interacts with SMAD3 and SMAD4. Binds through its N-terminal region to UTF1 which acts as a coactivator of ATF2 transcriptional activity. Interacts with the HK1/VDAC1 complex. Interacts with NBN, MRE11, XPO1, KAT5 and CUL3. Post-translationally, phosphorylation of Thr-51 by MAPK14 and MAPK11, and at Thr-53 by MAPK1/ERK2, MAPK3/ERK1, MAPK11, MAPK12 and MAPK14 in response to external stimulus like insulin causes increased transcriptional activity. Phosphorylated by PLK3 following hyperosmotic stress. Also phosphorylated and activated by JNK and CaMK4. ATM-mediated phosphorylation at Ser-472 and Ser-480 stimulates its function in DNA damage response. Phosphorylation at Ser-44, Thr-55 and Ser-103 activates its transcriptional activity. Phosphorylation at Thr-51 or Thr-53 enhances acetylation of histones H2B and H4.

Its subcellular location is the nucleus. It is found in the cytoplasm. The protein resides in the mitochondrion outer membrane. Functionally, transcriptional activator which regulates the transcription of various genes, including those involved in anti-apoptosis, cell growth, and DNA damage response. Dependent on its binding partner, binds to CRE (cAMP response element) consensus sequences (5'-TGACGTCA-3') or to AP-1 (activator protein 1) consensus sequences (5'-TGACTCA-3'). In the nucleus, contributes to global transcription and the DNA damage response, in addition to specific transcriptional activities that are related to cell development, proliferation and death. In the cytoplasm, interacts with and perturbs HK1- and VDAC1-containing complexes at the mitochondrial outer membrane, thereby impairing mitochondrial membrane potential, inducing mitochondrial leakage and promoting cell death. The phosphorylated form (mediated by ATM) plays a role in the DNA damage response and is involved in the ionizing radiation (IR)-induced S phase checkpoint control and in the recruitment of the MRN complex into the IR-induced foci (IRIF). Exhibits histone acetyltransferase (HAT) activity which specifically acetylates histones H2B and H4 in vitro. In concert with CUL3 and RBX1, promotes the degradation of KAT5 thereby attenuating its ability to acetylate and activate ATM. Can elicit oncogenic or tumor suppressor activities depending on the tissue or cell type. The protein is Cyclic AMP-dependent transcription factor ATF-2 (Atf2) of Rattus norvegicus (Rat).